Reading from the N-terminus, the 492-residue chain is Cytoplasmic dynein 1 light intermediate chain 2 (492 aa).

Gly61–Thr68 is a binding site for ATP. 3 disordered regions span residues Pro187 to Asp206, Ala371 to Ala423, and Leu437 to Ala492. Position 194 is a phosphoserine (Ser194). Residues Ala371–Ser381 are compositionally biased toward polar residues. Phosphoserine is present on residues Ser383 and Ser391. Arg397 carries the omega-N-methylarginine modification. Thr441 carries the post-translational modification Phosphothreonine. Residues Ser443 and Ser446 each carry the phosphoserine modification. The span at Val452–Gln469 shows a compositional bias: polar residues. The segment covering Glu471–Asp480 has biased composition (basic and acidic residues). The segment covering Met482–Ala492 has biased composition (polar residues).

Belongs to the dynein light intermediate chain family. Homodimer. The cytoplasmic dynein 1 complex consists of two catalytic heavy chains (HCs) and a number of non-catalytic subunits presented by intermediate chains (ICs), light intermediate chains (LICs) and light chains (LCs); the composition seems to vary in respect to the IC, LIC and LC composition. The heavy chain homodimer serves as a scaffold for the probable homodimeric assembly of the respective non-catalytic subunits. The ICs and LICs bind directly to the HC dimer and the LCs assemble on the IC dimer. Interacts with DYNC1H1; DYNC1LI1 and DYNC1LI2 bind mutually exclusive to DYNC1H.

It localises to the cytoplasm. The protein resides in the cytoskeleton. Its function is as follows. Acts as one of several non-catalytic accessory components of the cytoplasmic dynein 1 complex that are thought to be involved in linking dynein to cargos and to adapter proteins that regulate dynein function. Cytoplasmic dynein 1 acts as a motor for the intracellular retrograde motility of vesicles and organelles along microtubules. May play a role in binding dynein to membranous organelles or chromosomes. The chain is Cytoplasmic dynein 1 light intermediate chain 2 (DYNC1LI2) from Pongo abelii (Sumatran orangutan).